We begin with the raw amino-acid sequence, 1355 residues long: Collagen alpha-2(I) chain (1355 aa).

The first 22 residues, 1 to 22 (MLSFVDLRSVLLLAVTLYLVTC), serve as a signal peptide directing secretion. At Gln23 the chain carries Pyrrolidone carboxylic acid. Residues 23–71 (QEVRRGPRGDKGPPGEQGPPGIPGRDGEDGLPGLPGPPGVPGLGGNFAA) constitute a propeptide, N-terminal propeptide. The segment covering 26–35 (RRGPRGDKGP) has biased composition (basic and acidic residues). The segment at 26-1111 (RRGPRGDKGP…GDGGEYYRAD (1086 aa)) is disordered. Gln72 is modified (pyrrolidone carboxylic acid). Lys77 is subject to Allysine. The span at 99–108 (PGSQGFQGLP) shows a compositional bias: low complexity. Over residues 132–146 (AGEDGHPGKSGRPGE) the composition is skewed to basic and acidic residues. Lys168 carries the 5-hydroxylysine; alternate modification. O-linked (Gal...) hydroxylysine; alternate glycosylation occurs at Lys168. Positions 218 to 267 (PAGSAGSRGSDGSSGPVGPAGPIGSAGAPGLPGAPGAKGELGPAGNNGPT) are enriched in low complexity. A compositionally biased stretch (pro residues) spans 276–290 (PGPPGSLGPAGPPGN). Residues 291-303 (PGTNGVNGAKGTA) show a composition bias toward low complexity. A compositionally biased stretch (gly residues) spans 304–322 (GLPGVGGAPGLPGGRGIPG). Residues 327–336 (AGPSGARGLA) are compositionally biased toward low complexity. Gly residues-rich tracts occupy residues 340–349 (GIAGGKGDTG) and 403–412 (GRAGGIGPAG). Low complexity-rich tracts occupy residues 413–426 (SRGSSGPPGARGPN) and 465–495 (EGRSGAAGPAGARGEPGAIGFPGPKGPNGEP). Gly residues-rich tracts occupy residues 523 to 532 (GPAGLGGATG) and 586 to 595 (GESGGAGPHG). Residues 596-618 (PSGSRGPSGAPGPDGQKGEPGAA) are compositionally biased toward low complexity. Over residues 619–628 (GLNGGLGPSG) the composition is skewed to gly residues. Low complexity-rich tracts occupy residues 659–675 (NPGRDGARGPAGAAGAP), 687–701 (SGPAGPSGVAGPRGA), and 708–726 (AGPAGPTGFAGPPGAAGHT). Positions 728–738 (AKGDRGAKGPK) are enriched in basic and acidic residues. 2 stretches are compositionally biased toward low complexity: residues 741-767 (AGSPGPLGAHGSAGPAGPNGPAGSTGA) and 776-788 (ATGFPGPAGRAGA). The segment covering 804 to 813 (PGKDGSRGPR) has biased composition (basic and acidic residues). A compositionally biased stretch (low complexity) spans 852–869 (AGPSGVLGARGILGLPGT). Over residues 874–883 (GLPGGPGSNG) the composition is skewed to gly residues. 2 stretches are compositionally biased toward low complexity: residues 884-912 (EPGPSGLAGSSGPRGPPGSVGSPGPVGHS) and 947-966 (PSGLAGAPGPAGSAGPAGKS). A compositionally biased stretch (gly residues) spans 967 to 976 (GNRGEGGPSG). A compositionally biased stretch (basic and acidic residues) spans 996-1014 (RGDKGEAGERGARGLDGRK). Residues 1019-1041 (LSGLPGPSGTPGETGPSGSVGPV) show a composition bias toward low complexity. Residues 1080–1091 (AGPPGPPGPPGH) are compositionally biased toward pro residues. The segment covering 1093–1105 (GPSGGGYDGGDGG) has biased composition (gly residues). A propeptide spans 1111-1355 (DQPERKPKDY…GFEIGPVCFK (245 aa)) (C-terminal propeptide). In terms of domain architecture, Fibrillar collagen NC1 spans 1120–1355 (YEVDATLKSL…GFEIGPVCFK (236 aa)). 3 disulfides stabilise this stretch: Cys1150–Cys1182, Cys1190–Cys1353, and Cys1261–Cys1306. 5 residues coordinate Ca(2+): Asp1168, Asn1170, Gln1171, Cys1173, and Asp1176. 2 N-linked (GlcNAc...) asparagine glycosylation sites follow: Asn1206 and Asn1256.

This sequence belongs to the fibrillar collagen family. Trimers of one alpha 2(I) and two alpha 1(I) chains. Prolines at the third position of the tripeptide repeating unit (G-X-Y) are hydroxylated in some or all of the chains. As to expression, forms the fibrils of tendon, ligaments and bones. In bones the fibrils are mineralized with calcium hydroxyapatite.

Its subcellular location is the secreted. It is found in the extracellular space. The protein localises to the extracellular matrix. Its function is as follows. Type I collagen is a member of group I collagen (fibrillar forming collagen). The sequence is that of Collagen alpha-2(I) chain (COL1A2) from Aquarana catesbeiana (American bullfrog).